We begin with the raw amino-acid sequence, 552 residues long: Mothers against decapentaplegic homolog 4 (552 aa).

A mediates interaction with ZBTB7A region spans residues 1–322; the sequence is MDNMSITNTP…PISNHPAPEY (322 aa). The 125-residue stretch at 18–142 folds into the MH1 domain; the sequence is SIVHSLMCHR…YERVVSPGID (125 aa). N6-acetyllysine is present on lysine 37. The interval 44–69 is required for interaction with TSC22D1; it reads VKKLKEKKDELDSLITAITTNGAHPS. Cysteine 71 contributes to the Zn(2+) binding site. Lysine 113 is covalently cross-linked (Glycyl lysine isopeptide (Lys-Gly) (interchain with G-Cter in SUMO2)). Residues cysteine 115, cysteine 127, and histidine 132 each coordinate Zn(2+). The interval 264–297 is disordered; it reads STTTWTGSRTAPYPPNLPHHQNGHLQHHPPMPPH. The segment at 275-320 is SAD; sequence PYPPNLPHHQNGHLQHHPPMPPHPGHYWPVHNELAFQPPISNHPAP. The 230-residue stretch at 323 to 552 folds into the MH2 domain; sequence WCSIAYFEMD…MPIADPQPLD (230 aa). Lysine 428 and lysine 507 each carry N6-acetyllysine. Lysine 519 is covalently cross-linked (Glycyl lysine isopeptide (Lys-Gly) (interchain with G-Cter in ubiquitin)).

This sequence belongs to the dwarfin/SMAD family. As to quaternary structure, monomer; in the absence of TGF-beta activation. Heterotrimer; on TGF-beta activation. Heterotrimer composed of two molecules of a C-terminally phosphorylated R-SMAD molecule, SMAD2 or SMAD3, and one molecule of SMAD4 to form the transcriptional active SMAD2/SMAD3-SMAD4 complex. Found in a ternary complex composed of SMAD4, STK11/LKB1 and STK11IP. Found in a complex with SMAD1 and YY1. Identified in a complex that contains at least ZNF451, SMAD2, SMAD3 and SMAD4. Interacts with ATF2, COPS5, DACH1, MSG1, SKI, STK11/LKB1, STK11IP and TRIM33. Associates with ZNF423 or ZNF521 in response to BMP2 leading to activate transcription of BMP target genes. Interacts with USP9X. Interacts with RBPMS. Interacts with WWTR1 (via coiled-coil domain). Interacts with CITED1 and CITED2. Interacts with PDPK1 (via PH domain). Interacts with VPS39; this interaction affects heterodimer formation with SMAD3, but not with SMAD2, and leads to inhibition of SMAD3-dependent transcription activation. Interactions with VPS39 and SMAD2 may be mutually exclusive. Interacts (via MH2 domain) with ZNF451 (via N-terminal zinc-finger domains). Interacts with ZC3H3. Interacts weakly with ZNF8. Interacts with NUP93 and IPO7; translocates SMAD4 to the nucleus through the NPC upon BMP7 stimulation resulting in activation of SMAD4 signaling. Interacts with CREB3L1, the interaction takes place upon TGFB1 induction and SMAD4 acts as a CREB3L1 coactivator to induce the expression of genes involved in the assembly of collagen extracellular matrix. Interacts with DLX1. Interacts with ZBTB7A; the interaction is direct and stimulated by TGFB1. Interacts with CREBBP; the recruitment of this transcriptional coactivator is negatively regulated by ZBTB7A. Interacts with EP300; the interaction with this transcriptional coactivator is negatively regulated by ZBTB7A. Interacts with HDAC1. Interacts (via MH2 domain) with ZMIZ1 (via SP-RING-type domain); in the TGF-beta signaling pathway increases the activity of the SMAD3/SMAD4 transcriptional complex. Interacts (via N-terminus) with TSC22D1. Post-translationally, phosphorylated by PDPK1. Monoubiquitinated on Lys-519 by E3 ubiquitin-protein ligase TRIM33. Monoubiquitination hampers its ability to form a stable complex with activated SMAD2/3 resulting in inhibition of TGF-beta/BMP signaling cascade. Deubiquitination by USP9X restores its competence to mediate TGF-beta signaling.

Its subcellular location is the cytoplasm. The protein resides in the nucleus. Functionally, common SMAD (co-SMAD) is the coactivator and mediator of signal transduction by TGF-beta (transforming growth factor). Component of the heterotrimeric SMAD2/SMAD3-SMAD4 complex that forms in the nucleus and is required for the TGF-mediated signaling. Promotes binding of the SMAD2/SMAD4/FAST-1 complex to DNA and provides an activation function required for SMAD1 or SMAD2 to stimulate transcription. Component of the multimeric SMAD3/SMAD4/JUN/FOS complex which forms at the AP1 promoter site; required for synergistic transcriptional activity in response to TGF-beta. Acts synergistically with SMAD1 and YY1 in bone morphogenetic protein (BMP)-mediated cardiac-specific gene expression. Binds to SMAD binding elements (SBEs) (5'-GTCT/AGAC-3') within BMP response element (BMPRE) of cardiac activating regions. May act as a tumor suppressor. Positively regulates PDPK1 kinase activity by stimulating its dissociation from the 14-3-3 protein YWHAQ which acts as a negative regulator. In muscle physiology, plays a central role in the balance between atrophy and hypertrophy. When recruited by MSTN, promotes atrophy response via phosphorylated SMAD2/4. MSTN decrease causes SMAD4 release and subsequent recruitment by the BMP pathway to promote hypertrophy via phosphorylated SMAD1/5/8. In Sus scrofa (Pig), this protein is Mothers against decapentaplegic homolog 4 (SMAD4).